The primary structure comprises 149 residues: uncharacterized protein (149 aa).

Over residues 130–144 (ESNVTKENIEIKEEK) the composition is skewed to basic and acidic residues. Residues 130–149 (ESNVTKENIEIKEEKEENSE) are disordered.

This is an uncharacterized protein from Methanocaldococcus jannaschii (strain ATCC 43067 / DSM 2661 / JAL-1 / JCM 10045 / NBRC 100440) (Methanococcus jannaschii).